The following is a 466-amino-acid chain: GVGFKAGVKDYKLTYYTPEYETKDTDILAAFRVTPQPGVPPEEAGAAVAAESSTGTWTTVWTDGLTSLDRYKGRCYQIEPVAGEENQYIAYVAYPLDLFEEGSVTNMFTSIVGNVFGFKALRALRLEDLRIPPAYVKTFQGPPHGIQVERDKLNKYGRPLLGCTIKPKLGLSAKNYGRAVYECLRGGLDFTKDDENVNSQPFMRWRDRFLFCAEAIYKSQAETGEIKGHYLNATAGTCEEMIKRAVFARELGVPIVMHDYLTGGFTANTSLAHYCRDNGLLLHIHRAMHAVIDRQKNHGIHFRVLAKALRMSGGDHIHAGTVVGKLEGEREITLGFVDLLRDDFIEKDRSRGIYFTQDWVSLPGVLPVASGGIHVWHMPALTEIFGDDSVLQFGGGTLGHPWGNAPGAVANRVALEACVQARNEGRDLAREGNEIIREASKWSPELAAACEVWKEIKFEFEAMDTL.

Lys5 carries the N6,N6,N6-trimethyllysine modification. Residues Asn114 and Thr164 each coordinate substrate. Lys166 serves as the catalytic Proton acceptor. Lys168 is a substrate binding site. Residues Lys192, Asp194, and Glu195 each coordinate Mg(2+). At Lys192 the chain carries N6-carboxylysine. Residue His285 is the Proton acceptor of the active site. Residues Arg286, His318, and Ser370 each contribute to the substrate site.

This sequence belongs to the RuBisCO large chain family. Type I subfamily. As to quaternary structure, heterohexadecamer of 8 large chains and 8 small chains; disulfide-linked. The disulfide link is formed within the large subunit homodimers. Mg(2+) is required as a cofactor. Post-translationally, the disulfide bond which can form in the large chain dimeric partners within the hexadecamer appears to be associated with oxidative stress and protein turnover.

It is found in the plastid. The protein localises to the chloroplast. It carries out the reaction 2 (2R)-3-phosphoglycerate + 2 H(+) = D-ribulose 1,5-bisphosphate + CO2 + H2O. It catalyses the reaction D-ribulose 1,5-bisphosphate + O2 = 2-phosphoglycolate + (2R)-3-phosphoglycerate + 2 H(+). Its function is as follows. RuBisCO catalyzes two reactions: the carboxylation of D-ribulose 1,5-bisphosphate, the primary event in carbon dioxide fixation, as well as the oxidative fragmentation of the pentose substrate in the photorespiration process. Both reactions occur simultaneously and in competition at the same active site. This is Ribulose bisphosphate carboxylase large chain from Coriaria myrtifolia (Tanner's sumac).